Reading from the N-terminus, the 106-residue chain is uncharacterized protein (106 aa).

The protein resides in the mitochondrion. This is an uncharacterized protein from Claviceps purpurea (Ergot fungus).